The following is a 218-amino-acid chain: Probable transaldolase (218 aa).

The Schiff-base intermediate with substrate role is filled by Lys-84.

It belongs to the transaldolase family. Type 3B subfamily.

The protein localises to the cytoplasm. It catalyses the reaction D-sedoheptulose 7-phosphate + D-glyceraldehyde 3-phosphate = D-erythrose 4-phosphate + beta-D-fructose 6-phosphate. It functions in the pathway carbohydrate degradation; pentose phosphate pathway; D-glyceraldehyde 3-phosphate and beta-D-fructose 6-phosphate from D-ribose 5-phosphate and D-xylulose 5-phosphate (non-oxidative stage): step 2/3. Transaldolase is important for the balance of metabolites in the pentose-phosphate pathway. The polypeptide is Probable transaldolase (Sulfurihydrogenibium sp. (strain YO3AOP1)).